A 394-amino-acid chain; its full sequence is Ceramide glucosyltransferase-A (394 aa).

The Lumenal portion of the chain corresponds to 1–10 (MAVLDLALQG). Residues 11–32 (LAIFGCVLFFVLWFMHFLSIVY) form a helical membrane-spanning segment. Residues 33–195 (TRLHLNKKIS…QVYFGTSHPR (163 aa)) are Cytoplasmic-facing. Residue D92 is a short sequence motif, D1. A short sequence motif (D2) is located at residue D144. A helical membrane pass occupies residues 196-215 (SYISANVTGFKCVTGMSCLM). Residues 216–287 (RKEVLDQAGG…KLRINMLPAT (72 aa)) lie on the Lumenal side of the membrane. Residue D236 is a short sequence motif, D3. The active-site Proton acceptor is D236. The short motif at 272-276 (RMIRW) is the (Q/R)XXRW element. The chain crosses the membrane as a helical span at residues 288 to 304 (IICEPISECFVASLIIG). Residues 305–309 (WAAHH) lie on the Cytoplasmic side of the membrane. The chain crosses the membrane as a helical span at residues 310–328 (IFRWDIMVFFMCHCLAWFI). Residues 329–348 (FDYIQLRGVQGGPLNFSKLD) lie on the Lumenal side of the membrane. Residues 349 to 369 (YAVAWFIRESMTIYIFLSALW) form a helical membrane-spanning segment. Residues 370–394 (DPTISWRTGRFRLRCGGTAEEILDV) lie on the Cytoplasmic side of the membrane.

The protein belongs to the glycosyltransferase 2 family. As to expression, at the late gastrula stage, weakly expressed ubiquitously. As neurulation proceeds (stages 15-16), expression moves towards the dorsal structures: involuted paraxial mesoderm and neural folds. In the tailbud embryo (stage 28), expression is restricted to the notochord. At later stages (stage 35), expression remains in the notochord and also appears weakly in the cephalic region.

It localises to the golgi apparatus membrane. It carries out the reaction an N-acylsphing-4-enine + UDP-alpha-D-glucose = a beta-D-glucosyl-(1&lt;-&gt;1')-N-acylsphing-4-enine + UDP + H(+). The enzyme catalyses UDP-alpha-D-xylose + an N-acylsphing-4-enine = a beta-D-xylosyl-(1&lt;-&gt;1')-N-acylsphing-4-enine + UDP + H(+). The catalysed reaction is N-(9Z-octadecenoyl)-sphing-4-enine + UDP-alpha-D-xylose = beta-D-xylosyl-(1&lt;-&gt;1')-N-(9Z-octadecenoyl)-sphing-4-enine + UDP + H(+). The protein operates within lipid metabolism; sphingolipid metabolism. Its function is as follows. Participates in the initial step of the glucosylceramide-based glycosphingolipid/GSL synthetic pathway at the cytosolic surface of the Golgi. Catalyzes the transfer of glucose from UDP-glucose to ceramide to produce glucosylceramide/GlcCer (such as beta-D-glucosyl-(1&lt;-&gt;1')-N-acylsphing-4-enine). Glucosylceramide is the core component of glycosphingolipids/GSLs, amphipathic molecules consisting of a ceramide lipid moiety embedded in the outer leaflet of the membrane, linked to one of hundreds of different externally oriented oligosaccharide structures. Glycosphingolipids are essential components of membrane microdomains that mediate membrane trafficking and signal transduction. They are implicated in many fundamental cellular processes, including growth, differentiation, migration, morphogenesis, cell-to-cell and cell-to-matrix interactions. Glycosphingolipids are required for convergence extension movements during early development. Catalyzes the synthesis of xylosylceramide/XylCer (such as beta-D-xylosyl-(1&lt;-&gt;1')-N-acylsphing-4-enine) using UDP-Xyl as xylose donor. This Xenopus laevis (African clawed frog) protein is Ceramide glucosyltransferase-A (ugcg-a).